A 225-amino-acid chain; its full sequence is Phosphatidylserine decarboxylase proenzyme (225 aa).

Serine 195 acts as the Schiff-base intermediate with substrate; via pyruvic acid in catalysis. Pyruvic acid (Ser); by autocatalysis is present on serine 195.

This sequence belongs to the phosphatidylserine decarboxylase family. PSD-A subfamily. In terms of assembly, heterodimer of a large membrane-associated beta subunit and a small pyruvoyl-containing alpha subunit. It depends on pyruvate as a cofactor. Is synthesized initially as an inactive proenzyme. Formation of the active enzyme involves a self-maturation process in which the active site pyruvoyl group is generated from an internal serine residue via an autocatalytic post-translational modification. Two non-identical subunits are generated from the proenzyme in this reaction, and the pyruvate is formed at the N-terminus of the alpha chain, which is derived from the carboxyl end of the proenzyme. The post-translation cleavage follows an unusual pathway, termed non-hydrolytic serinolysis, in which the side chain hydroxyl group of the serine supplies its oxygen atom to form the C-terminus of the beta chain, while the remainder of the serine residue undergoes an oxidative deamination to produce ammonia and the pyruvoyl prosthetic group on the alpha chain.

It is found in the cell membrane. The enzyme catalyses a 1,2-diacyl-sn-glycero-3-phospho-L-serine + H(+) = a 1,2-diacyl-sn-glycero-3-phosphoethanolamine + CO2. Its pathway is phospholipid metabolism; phosphatidylethanolamine biosynthesis; phosphatidylethanolamine from CDP-diacylglycerol: step 2/2. Its function is as follows. Catalyzes the formation of phosphatidylethanolamine (PtdEtn) from phosphatidylserine (PtdSer). In Gluconacetobacter diazotrophicus (strain ATCC 49037 / DSM 5601 / CCUG 37298 / CIP 103539 / LMG 7603 / PAl5), this protein is Phosphatidylserine decarboxylase proenzyme.